We begin with the raw amino-acid sequence, 381 residues long: Prostatic acid phosphatase (381 aa).

The first 31 residues, 1–31, serve as a signal peptide directing secretion; the sequence is MRAVPLPLSRTASLSLGFLLLLSLCLDPGQA. Arg-42 contributes to the substrate binding site. The active-site Nucleophile is His-43. Arg-46 provides a ligand contact to substrate. N-linked (GlcNAc...) asparagine glycosylation is present at Asn-93. Arg-110 is a substrate binding site. Cystine bridges form between Cys-160–Cys-371, Cys-214–Cys-312, and Cys-346–Cys-350. Asn-219 carries an N-linked (GlcNAc...) asparagine glycan. His-288 serves as a coordination point for substrate. Asp-289 acts as the Proton donor in catalysis. Residue Asn-332 is glycosylated (N-linked (GlcNAc...) asparagine).

The protein belongs to the histidine acid phosphatase family. As to quaternary structure, homodimer; dimer formation is required for phosphatase activity. As to expression, expressed in salivary gland, thymus and thyroid gland. In terms of tissue distribution, widely expressed in prostate lobes, brain, kidney, liver, lung, muscle, placenta, salivary gland, spleen, thyroid and thymus. Locates to Schwann cells and fibroblasts. Expressed in peptidergic and non-peptidergic nociceptive (pain-sensing) neurons. Preferentially expressed in non-peptidergic doral root ganglia neurons.

The protein resides in the secreted. It localises to the cell membrane. Its subcellular location is the lysosome membrane. The catalysed reaction is a phosphate monoester + H2O = an alcohol + phosphate. The enzyme catalyses a ribonucleoside 5'-phosphate + H2O = a ribonucleoside + phosphate. It catalyses the reaction 1-(9Z-octadecenoyl)-sn-glycero-3-phosphate + H2O = 1-(9Z-octadecenoyl)-sn-glycerol + phosphate. It carries out the reaction O-phospho-L-tyrosyl-[protein] + H2O = L-tyrosyl-[protein] + phosphate. Functionally, a non-specific tyrosine phosphatase that dephosphorylates a diverse number of substrates under acidic conditions (pH 4-6) including alkyl, aryl, and acyl orthophosphate monoesters and phosphorylated proteins. Has lipid phosphatase activity and inactivates lysophosphatidic acid in seminal plasma. Its function is as follows. In addition to its tyrosine phosphatase activity, also has ecto-5'-nucleotidase activity in dorsal root ganglion (DRG) neurons. Generates adenosine from AMP. This extracellular adenosine leads to a decrease in chronic pain by activating A1R in nociceptive neurons. This is Prostatic acid phosphatase (Acp3) from Mus musculus (Mouse).